The following is an 86-amino-acid chain: Small ribosomal subunit protein bS20 (86 aa).

This sequence belongs to the bacterial ribosomal protein bS20 family.

In terms of biological role, binds directly to 16S ribosomal RNA. This is Small ribosomal subunit protein bS20 from Bifidobacterium longum (strain DJO10A).